A 475-amino-acid polypeptide reads, in one-letter code: Endoglucanase A (475 aa).

Residues 1-26 (MKKTTAFLLCFLMIFTALLPMQNANA) form the signal peptide. Residue His-147 is part of the active site. Residue Glu-195 is the Proton donor of the active site. Glu-332 acts as the Nucleophile in catalysis. Residues 409–474 (PVIVYGDYNN…LLGMVSKLPS (66 aa)) enclose the Dockerin domain.

This sequence belongs to the glycosyl hydrolase 5 (cellulase A) family.

It catalyses the reaction Endohydrolysis of (1-&gt;4)-beta-D-glucosidic linkages in cellulose, lichenin and cereal beta-D-glucans.. In terms of biological role, the biological conversion of cellulose to glucose generally requires three types of hydrolytic enzymes: (1) Endoglucanases which cut internal beta-1,4-glucosidic bonds; (2) Exocellobiohydrolases that cut the disaccharide cellobiose from the non-reducing end of the cellulose polymer chain; (3) Beta-1,4-glucosidases which hydrolyze the cellobiose and other short cello-oligosaccharides to glucose. The chain is Endoglucanase A (celCCA) from Ruminiclostridium cellulolyticum (strain ATCC 35319 / DSM 5812 / JCM 6584 / H10) (Clostridium cellulolyticum).